Here is a 268-residue protein sequence, read N- to C-terminus: Myeloid leukemia factor 1 (268 aa).

Ser-6, Ser-8, and Ser-32 each carry phosphoserine. Positions 50–125 (RVHNRRGHND…IGDEPPKVFQ (76 aa)) are interaction with COPS3. The tract at residues 208–268 (PGRHNLENTR…KGSSVKSNKK (61 aa)) is disordered. Composition is skewed to basic and acidic residues over residues 226 to 237 (PGSRELKRREKP) and 244 to 257 (EHGR…DKLH).

It belongs to the MLF family. As to quaternary structure, interacts with CENPU. Also interacts with NRBP1/MADM, YWHAZ/14-3-3-zeta and HNRPUL2/MANP. NRBP1 recruits a serine kinase which phosphorylates both itself and MLF1. Phosphorylated MLF1 then binds to YWHAZ and is retained in the cytoplasm. Retained in the nucleus by binding to HNRPUL2. Binds to COPS3/CSN3 which is required for suppression of COP1 and activation of p53. Phosphorylation is required for binding to YWHAZ.

It is found in the cytoplasm. Its subcellular location is the nucleus. The protein resides in the cell projection. It localises to the cilium. The protein localises to the cytoskeleton. It is found in the cilium basal body. Functionally, involved in lineage commitment of primary hemopoietic progenitors by restricting erythroid formation and enhancing myeloid formation. Interferes with erythropoietin-induced erythroid terminal differentiation by preventing cells from exiting the cell cycle through suppression of CDKN1B/p27Kip1 levels. Suppresses COP1 activity via CSN3 which activates p53 and induces cell cycle arrest. Binds DNA and affects the expression of a number of genes so may function as a transcription factor in the nucleus. The polypeptide is Myeloid leukemia factor 1 (MLF1) (Pongo abelii (Sumatran orangutan)).